Reading from the N-terminus, the 118-residue chain is Appetite-regulating hormone (118 aa).

A signal peptide spans 1–24 (MPSTGTICSLLLLSVLLMADLAMA). A lipid anchor (O-decanoyl serine; alternate) is attached at Ser-27. Residue Ser-27 is the site of O-hexanoyl serine; alternate attachment. Ser-27 carries the O-octanoyl serine; alternate lipid modification. A disordered region spans residues 29–50 (LSPEHQKVQQRKESKKPAAKLK). Residues 32-44 (EHQKVQQRKESKK) are compositionally biased toward basic and acidic residues. Positions 53 to 76 (ALEGWLGPEDSGEVEGTEDKLEIR) are cleaved as a propeptide — removed in mature form. Leu-99 is modified (leucine amide). Residues 100–118 (GKFLQDILWEEVTEAPADK) constitute a propeptide, removed in mature form.

The protein belongs to the motilin family. In terms of processing, O-octanoylated by GOAT/MBOAT4. O-octanoylation is essential for ghrelin activity. Amidation of Leu-99 is essential for obestatin activity.

Its subcellular location is the secreted. Functionally, ghrelin is the ligand for growth hormone secretagogue receptor type 1 (GHSR). Induces the release of growth hormone from the pituitary. Has an appetite-stimulating effect, induces adiposity and stimulates gastric acid secretion. Involved in growth regulation. In terms of biological role, obestatin may be the ligand for GPR39. May have an appetite-reducing effect resulting in decreased food intake. May reduce gastric emptying activity and jejunal motility. The protein is Appetite-regulating hormone (GHRL) of Sus scrofa (Pig).